The chain runs to 168 residues: Small ribosomal subunit protein uS5 (168 aa).

Residues 11-74 enclose the S5 DRBM domain; that stretch reads YSEKVVKIDR…EAAKKHLVKI (64 aa).

This sequence belongs to the universal ribosomal protein uS5 family. As to quaternary structure, part of the 30S ribosomal subunit. Contacts proteins S4 and S8.

In terms of biological role, with S4 and S12 plays an important role in translational accuracy. Its function is as follows. Located at the back of the 30S subunit body where it stabilizes the conformation of the head with respect to the body. The polypeptide is Small ribosomal subunit protein uS5 (Leptospira borgpetersenii serovar Hardjo-bovis (strain JB197)).